A 385-amino-acid chain; its full sequence is Putative non-inhibitory serpin-Z11 (385 aa).

The interval 324 to 348 is RCL; it reads GTTAVEAMYSPSSPGYSPGYQPPRP.

It belongs to the serpin family.

The sequence is that of Putative non-inhibitory serpin-Z11 from Oryza sativa subsp. japonica (Rice).